A 358-amino-acid chain; its full sequence is Phospho-N-acetylmuramoyl-pentapeptide-transferase (358 aa).

10 helical membrane passes run 19 to 39 (YLTL…VLIG), 71 to 91 (TMGG…WADL), 95 to 115 (YVWV…IDDY), 126 to 146 (LIAR…ALYL), 166 to 186 (VMPQ…VGTS), 194 to 214 (GLDG…AIFA), 237 to 257 (LVIV…FNTY), 261 to 281 (VFMG…IAVL), 286 to 306 (IVLV…ILQV), and 336 to 356 (VIVR…ATLK).

This sequence belongs to the glycosyltransferase 4 family. MraY subfamily. It depends on Mg(2+) as a cofactor.

It is found in the cell inner membrane. It catalyses the reaction UDP-N-acetyl-alpha-D-muramoyl-L-alanyl-gamma-D-glutamyl-meso-2,6-diaminopimeloyl-D-alanyl-D-alanine + di-trans,octa-cis-undecaprenyl phosphate = di-trans,octa-cis-undecaprenyl diphospho-N-acetyl-alpha-D-muramoyl-L-alanyl-D-glutamyl-meso-2,6-diaminopimeloyl-D-alanyl-D-alanine + UMP. It participates in cell wall biogenesis; peptidoglycan biosynthesis. Its function is as follows. Catalyzes the initial step of the lipid cycle reactions in the biosynthesis of the cell wall peptidoglycan: transfers peptidoglycan precursor phospho-MurNAc-pentapeptide from UDP-MurNAc-pentapeptide onto the lipid carrier undecaprenyl phosphate, yielding undecaprenyl-pyrophosphoryl-MurNAc-pentapeptide, known as lipid I. The protein is Phospho-N-acetylmuramoyl-pentapeptide-transferase of Pseudoalteromonas atlantica (strain T6c / ATCC BAA-1087).